We begin with the raw amino-acid sequence, 373 residues long: Enoyl-[acyl-carrier-protein] reductase, mitochondrial (373 aa).

Residues 1–53 constitute a mitochondrion transit peptide; that stretch reads MWVCSTLWRVRTPARQWRGLLPASGCHGPAASSYSASAEPARVRALVYGHHGD. The residue at position 61 (Lys-61) is an N6-acetyllysine; alternate. An N6-succinyllysine; alternate modification is found at Lys-61. Tyr-94 functions as the Proton donor in the catalytic mechanism. NADP(+)-binding positions include Asn-167, 193-196, and 216-218; these read NSGV and RDR. An N6-acetyllysine; alternate mark is found at Lys-252 and Lys-267. N6-succinyllysine; alternate is present on residues Lys-252 and Lys-267. NADP(+) is bound by residues 285–288 and 310–312; these read YGGM and FWL. Lys-316 bears the N6-succinyllysine mark. Lys-368 is a binding site for NADP(+).

Belongs to the zinc-containing alcohol dehydrogenase family. Quinone oxidoreductase subfamily. Homodimer. Isoform 2 interacts with PPARA in the nucleus and increases its activity. Highly expressed in skeletal and heart muscle. Expressed at lower level in placenta, liver, kidney and pancreas. Weakly or not expressed in lung.

It is found in the mitochondrion. The protein resides in the cytoplasm. Its subcellular location is the nucleus. It carries out the reaction a 2,3-saturated acyl-[ACP] + NADP(+) = a (2E)-enoyl-[ACP] + NADPH + H(+). The enzyme catalyses (2E)-butenoyl-[ACP] + NADPH + H(+) = butanoyl-[ACP] + NADP(+). It catalyses the reaction (2E)-hexenoyl-[ACP] + NADPH + H(+) = hexanoyl-[ACP] + NADP(+). The catalysed reaction is (2E)-octenoyl-[ACP] + NADPH + H(+) = octanoyl-[ACP] + NADP(+). It carries out the reaction (2E)-decenoyl-[ACP] + NADPH + H(+) = decanoyl-[ACP] + NADP(+). The enzyme catalyses (2E)-dodecenoyl-[ACP] + NADPH + H(+) = dodecanoyl-[ACP] + NADP(+). It catalyses the reaction (2E)-tetradecenoyl-[ACP] + NADPH + H(+) = tetradecanoyl-[ACP] + NADP(+). The catalysed reaction is (2E)-hexadecenoyl-[ACP] + NADPH + H(+) = hexadecanoyl-[ACP] + NADP(+). In terms of biological role, catalyzes the NADPH-dependent reduction of trans-2-enoyl thioesters in mitochondrial fatty acid synthesis (fatty acid synthesis type II). Fatty acid chain elongation in mitochondria uses acyl carrier protein (ACP) as an acyl group carrier, but the enzyme accepts both ACP and CoA thioesters as substrates in vitro. Displays a preference for medium-chain over short- and long-chain substrates. May provide the octanoyl chain used for lipoic acid biosynthesis, regulating protein lipoylation and mitochondrial respiratory activity particularly in Purkinje cells. Involved in iron homeostasis; affecting Fe-S cluster assembly and ceramide metabolism. Required for proper morphology and bioenergetic functions of mitochondria. Required for maintenance of neurons. This Homo sapiens (Human) protein is Enoyl-[acyl-carrier-protein] reductase, mitochondrial (MECR).